The primary structure comprises 208 residues: Uracil phosphoribosyltransferase (208 aa).

Residues arginine 78, arginine 103, and 130-138 contribute to the 5-phospho-alpha-D-ribose 1-diphosphate site; that span reads DPMLATGGS. Residues isoleucine 193 and 198-200 each bind uracil; that span reads GDA. Aspartate 199 provides a ligand contact to 5-phospho-alpha-D-ribose 1-diphosphate.

It belongs to the UPRTase family. Mg(2+) serves as cofactor.

The enzyme catalyses UMP + diphosphate = 5-phospho-alpha-D-ribose 1-diphosphate + uracil. Its pathway is pyrimidine metabolism; UMP biosynthesis via salvage pathway; UMP from uracil: step 1/1. Its activity is regulated as follows. Allosterically activated by GTP. Its function is as follows. Catalyzes the conversion of uracil and 5-phospho-alpha-D-ribose 1-diphosphate (PRPP) to UMP and diphosphate. The sequence is that of Uracil phosphoribosyltransferase from Pasteurella multocida (strain Pm70).